A 146-amino-acid polypeptide reads, in one-letter code: Ribosome maturation factor RimP (146 aa).

This sequence belongs to the RimP family.

The protein resides in the cytoplasm. Its function is as follows. Required for maturation of 30S ribosomal subunits. The protein is Ribosome maturation factor RimP of Helicobacter pylori (strain J99 / ATCC 700824) (Campylobacter pylori J99).